Here is a 393-residue protein sequence, read N- to C-terminus: Putative bacilysin exporter BacE (393 aa).

10 consecutive transmembrane segments (helical) span residues 11-31 (LLFG…ALLI), 43-63 (SGVI…GVLV), 69-89 (VKIM…LTFL), 92-112 (GEYP…GVFF), 133-155 (LFAK…FLLG), 160-177 (LAVA…FFIS), 215-235 (MFTM…FPIV), 244-264 (IGNF…AALV), 287-307 (ALFL…LFFI), and 353-373 (IVDA…LFLH).

This sequence belongs to the major facilitator superfamily.

The protein resides in the cell membrane. Part of the bacilysin biosynthesis operon. May be involved in self-resistance to bacilysin by permitting efflux of this antibiotic. The polypeptide is Putative bacilysin exporter BacE (bacE) (Bacillus subtilis).